The primary structure comprises 145 residues: UPF0735 ACT domain-containing protein CKL_0858 (145 aa).

Residues Thr-69 to Val-144 enclose the ACT domain.

Belongs to the UPF0735 family.

This Clostridium kluyveri (strain ATCC 8527 / DSM 555 / NBRC 12016 / NCIMB 10680 / K1) protein is UPF0735 ACT domain-containing protein CKL_0858.